The sequence spans 246 residues: Bis(5'-nucleosyl)-tetraphosphatase PrpE [asymmetrical] (246 aa).

It belongs to the PrpE family. It depends on Ni(2+) as a cofactor.

It catalyses the reaction P(1),P(4)-bis(5'-guanosyl) tetraphosphate + H2O = GMP + GTP + 2 H(+). Its function is as follows. Asymmetrically hydrolyzes Ap4p to yield AMP and ATP. The chain is Bis(5'-nucleosyl)-tetraphosphatase PrpE [asymmetrical] from Bacillus cereus (strain B4264).